Reading from the N-terminus, the 475-residue chain is Ribulose bisphosphate carboxylase large chain (475 aa).

The propeptide occupies 1–2; it reads MA. An N-acetylproline modification is found at Pro3. Lys14 bears the N6,N6,N6-trimethyllysine mark. Substrate-binding residues include Asn123 and Thr173. Lys175 serves as the catalytic Proton acceptor. Position 177 (Lys177) interacts with substrate. Mg(2+)-binding residues include Lys201, Asp203, and Glu204. Lys201 carries the N6-carboxylysine modification. His294 serves as the catalytic Proton acceptor. Substrate is bound by residues Arg295, His327, and Ser379.

Belongs to the RuBisCO large chain family. Type I subfamily. In terms of assembly, heterohexadecamer of 8 large chains and 8 small chains; disulfide-linked. The disulfide link is formed within the large subunit homodimers. It depends on Mg(2+) as a cofactor. Post-translationally, the disulfide bond which can form in the large chain dimeric partners within the hexadecamer appears to be associated with oxidative stress and protein turnover.

The protein resides in the plastid. The protein localises to the chloroplast. It catalyses the reaction 2 (2R)-3-phosphoglycerate + 2 H(+) = D-ribulose 1,5-bisphosphate + CO2 + H2O. It carries out the reaction D-ribulose 1,5-bisphosphate + O2 = 2-phosphoglycolate + (2R)-3-phosphoglycerate + 2 H(+). Its function is as follows. RuBisCO catalyzes two reactions: the carboxylation of D-ribulose 1,5-bisphosphate, the primary event in carbon dioxide fixation, as well as the oxidative fragmentation of the pentose substrate in the photorespiration process. Both reactions occur simultaneously and in competition at the same active site. This is Ribulose bisphosphate carboxylase large chain from Oedogonium cardiacum (Filamentous green alga).